Consider the following 484-residue polypeptide: MKFIVKLYPEIMMKSKPVRMRFTKMLETNIRNVLKKVDEDAKVQRQWDRIWVKVPNDKPELAQAFGERLACIPGIAHVVQVDEYSFTSVDDIYQQVLPVYRDQIAGKTFCVRVKRTGSHDFNSIEVERYVGGGLNQFTDAIGVRLKNPEVTVNLEIEGDKLYMVTKRIEGLGGFPMATQEDVLSLISGGFDSGVSSYQFIKKGARTHYCFFNLGGAQHEIGVKQVAYHLWKTYGESHKVKFVSVPFEPVVAEILEKIDNGQMGVVLKRMMMRTAARIAERMGIQAIVTGESLGQVSSQTLTNLNVIDRCTDMLILRPLIAMDKQDIINECRRIGTEDFAKSMPEYCGVISQKPTVKAVLAKVEAEETKFSEDLIDRIVEQAVAIDIREIAEQMNTRITETETVVAIDTNEVVIDIRAPEEEENKPLEIEGVEIKRIPFFKLATQFADLDKQKTYLLYCERGVMSKLQALYLIEQGYHNVKVYRP.

Residues 63 to 167 (QAFGERLACI…GDKLYMVTKR (105 aa)) form the THUMP domain. ATP-binding positions include 185-186 (LI), Lys-267, Gly-289, and Gln-298. Cys-346 and Cys-458 are joined by a disulfide. The 79-residue stretch at 406–484 (IDTNEVVIDI…GYHNVKVYRP (79 aa)) folds into the Rhodanese domain. Catalysis depends on Cys-458, which acts as the Cysteine persulfide intermediate.

Belongs to the ThiI family.

It is found in the cytoplasm. The enzyme catalyses [ThiI sulfur-carrier protein]-S-sulfanyl-L-cysteine + a uridine in tRNA + 2 reduced [2Fe-2S]-[ferredoxin] + ATP + H(+) = [ThiI sulfur-carrier protein]-L-cysteine + a 4-thiouridine in tRNA + 2 oxidized [2Fe-2S]-[ferredoxin] + AMP + diphosphate. It catalyses the reaction [ThiS sulfur-carrier protein]-C-terminal Gly-Gly-AMP + S-sulfanyl-L-cysteinyl-[cysteine desulfurase] + AH2 = [ThiS sulfur-carrier protein]-C-terminal-Gly-aminoethanethioate + L-cysteinyl-[cysteine desulfurase] + A + AMP + 2 H(+). It participates in cofactor biosynthesis; thiamine diphosphate biosynthesis. Its function is as follows. Catalyzes the ATP-dependent transfer of a sulfur to tRNA to produce 4-thiouridine in position 8 of tRNAs, which functions as a near-UV photosensor. Also catalyzes the transfer of sulfur to the sulfur carrier protein ThiS, forming ThiS-thiocarboxylate. This is a step in the synthesis of thiazole, in the thiamine biosynthesis pathway. The sulfur is donated as persulfide by IscS. The protein is tRNA sulfurtransferase of Shewanella sp. (strain ANA-3).